The following is a 370-amino-acid chain: Muconate cycloisomerase 1 (370 aa).

Residue Lys166 is part of the active site. Mn(2+)-binding residues include Asp195, Glu221, and Asp246.

The protein belongs to the mandelate racemase/muconate lactonizing enzyme family. Homooctamer. Mn(2+) serves as cofactor.

It catalyses the reaction (S)-muconolactone = cis,cis-muconate + H(+). It functions in the pathway aromatic compound metabolism; beta-ketoadipate pathway; 5-oxo-4,5-dihydro-2-furylacetate from catechol: step 2/3. In terms of biological role, catalyzes a syn cycloisomerization. In Acinetobacter baylyi (strain ATCC 33305 / BD413 / ADP1), this protein is Muconate cycloisomerase 1 (catB).